We begin with the raw amino-acid sequence, 359 residues long: 4-galactosyl-N-acetylglucosaminide 3-alpha-L-fucosyltransferase 9 (359 aa).

The Cytoplasmic portion of the chain corresponds to 1 to 11; it reads MTSTSKGILRP. A helical; Signal-anchor for type II membrane protein membrane pass occupies residues 12–32; that stretch reads FLIVCIILGCFVACLLIYIKP. Residues 33 to 359 lie on the Lumenal side of the membrane; it reads TNSWVFSPME…VGNLEKWFWN (327 aa). N-linked (GlcNAc...) asparagine glycosylation occurs at N62. Residues 63 to 168 are acceptor-binding; the sequence is ETTILVWVWP…RRDSDIQVPY (106 aa). Residue Q75 participates in a beta-D-galactosyl-(1-&gt;4)-N-acetyl-beta-D-glucosaminyl derivative binding. 3 cysteine pairs are disulfide-bonded: C82–C335, C91–C338, and C190–C238. N101 carries an N-linked (GlcNAc...) asparagine glycan. Residue E137 participates in a beta-D-galactosyl-(1-&gt;4)-N-acetyl-beta-D-glucosaminyl derivative binding. E137 serves as the catalytic Nucleophile. E137 contributes to the GDP-beta-L-fucose binding site. N-linked (GlcNAc...) asparagine glycosylation occurs at N153. The GDP-beta-L-fucose site is built by Y168, V192, S194, N195, R202, V226, Y241, N246, Y252, E255, and K256. The segment at 169–326 is donor-binding; sequence GFLTVSTSPF…NWRKDFTVNL (158 aa). Residues 327–359 form an acceptor-binding region; it reads PRFWESHACLACDHVKRHQEYKSVGNLEKWFWN.

It belongs to the glycosyltransferase 10 family. In terms of assembly, homodimer. Post-translationally, N-glycosylated with complex-type N-glycans.

It is found in the golgi apparatus. Its subcellular location is the trans-Golgi network membrane. The protein resides in the golgi apparatus membrane. The enzyme catalyses a beta-D-galactosyl-(1-&gt;4)-N-acetyl-beta-D-glucosaminyl derivative + GDP-beta-L-fucose = a beta-D-galactosyl-(1-&gt;4)-[alpha-L-fucosyl-(1-&gt;3)]-N-acetyl-beta-D-glucosaminyl derivative + GDP + H(+). It catalyses the reaction an alpha-Neu5Ac-(2-&gt;3)-beta-D-Gal-(1-&gt;4)-beta-D-GlcNAc-(1-&gt;3)-beta-D-Gal-(1-&gt;4)-beta-D-GlcNAc derivative + GDP-beta-L-fucose = an alpha-Neu5Ac-(2-&gt;3)-beta-D-Gal-(1-&gt;4)-beta-D-GlcNAc-(1-&gt;3)-beta-D-Gal-(1-&gt;4)-[alpha-L-Fuc-(1-&gt;3)]-beta-D-GlcNAc derivative + GDP + H(+). The catalysed reaction is alpha-N-glycoloylneuraminosyl-(2-&gt;3)-beta-D-galactosyl-(1-&gt;4)-N-acetyl-beta-D-glucosaminyl-(1-&gt;3)-beta-D-galactosyl-(1-&gt;4)-N-acetyl-beta-D-glucosaminyl-(1-&gt;3)-beta-D-galactosyl-(1-&gt;4)-beta-D-glucosyl-(1&lt;-&gt;1')-ceramide + GDP-beta-L-fucose = alpha-N-glycoloylneuraminosyl-(2-&gt;3)-beta-D-galactosyl-(1-&gt;4)-N-acetyl-beta-D-glucosaminyl-(1-&gt;3)-beta-D-galactosyl-(1-&gt;4)-[alpha-L-fucosyl-(1-&gt;3)]-N-acetyl-beta-D-glucosaminyl-(1-&gt;3)-beta-D-galactosyl-(1-&gt;4)-beta-D-glucosyl-(1&lt;-&gt;1')-ceramide + GDP + H(+). It carries out the reaction alpha-D-galactosyl-(1-&gt;3)-beta-D-galactosyl-(1-&gt;4)-N-acetyl-beta-D-glucosaminyl-(1-&gt;3)-beta-D-galactosyl-(1-&gt;4)-beta-D-glucosyl-(1&lt;-&gt;1')-ceramide + GDP-beta-L-fucose = a neolactoside IV(3)-alpha-Gal,III(3)-alpha-Fuc-nLc4Cer + GDP + H(+). The enzyme catalyses a neolactoside nLc4Cer + GDP-beta-L-fucose = a neolactoside III(3)-alpha-Fuc-nLc4Cer + GDP + H(+). It catalyses the reaction an N-acetyl-alpha-neuraminyl-(2-&gt;3)-beta-D-galactosyl-(1-&gt;4)-N-acetyl-beta-D-glucosaminyl derivative + GDP-beta-L-fucose = an alpha-Neu5Ac-(2-&gt;3)-beta-D-Gal-(1-&gt;4)-[alpha-L-Fuc-(1-&gt;3)]-beta-D-GlcNAc derivative + GDP + H(+). The catalysed reaction is beta-D-Gal-(1-&gt;4)-beta-D-GlcNAc-(1-&gt;3)-beta-D-Gal-(1-&gt;4)-D-Glc + GDP-beta-L-fucose = beta-D-Gal-(1-&gt;4)-[alpha-L-Fuc-(1-&gt;3)]-beta-D-GlcNAc-(1-&gt;3)-beta-D-Gal-(1-&gt;4)-D-Glc + GDP + H(+). It carries out the reaction an alpha-L-Fuc-(1-&gt;2)-beta-D-Gal-(1-&gt;4)-beta-D-GlcNAc derivative + GDP-beta-L-fucose = an alpha-L-Fuc-(1-&gt;2)-beta-D-Gal-(1-&gt;4)-[alpha-L-Fuc-(1-&gt;3)]-beta-D-GlcNAc derivative + GDP + H(+). The protein operates within protein modification; protein glycosylation. It functions in the pathway glycolipid biosynthesis. Its activity is regulated as follows. Activated by Mn2+. Functionally, catalyzes alpha(1-&gt;3) linkage of fucosyl moiety transferred from GDP-beta-L-fucose to N-acetyl glucosamine (GlcNAc) within type 2 lactosamine (LacNAc, beta-D-Gal-(1-&gt;4)-beta-D-GlcNAc-) glycan attached to glycolipids and N- or O-linked glycoproteins. Fucosylates distal type 2 LacNAc and its fucosylated (H-type 2 LacNAc) and sialylated (sialyl-type 2 LacNAc) derivatives to form Lewis x (Lex) (CD15) and Lewis y (Ley) antigenic epitopes involved in cell adhesion and differentiation. Generates Lex epitopes in the brain, presumably playing a role in the maintenance of neuronal stemness and neurite outgrowth in progenitor neural cells. Fucosylates the internal type 2 LacNAc unit of the polylactosamine chain to form VIM-2 antigen that serves as recognition epitope for SELE. Can also modify milk oligosaccharides in particular type 2 tetrasaccharide LNnT. The chain is 4-galactosyl-N-acetylglucosaminide 3-alpha-L-fucosyltransferase 9 from Rattus norvegicus (Rat).